We begin with the raw amino-acid sequence, 352 residues long: Photosystem II D2 protein (352 aa).

A helical membrane pass occupies residues 40 to 60; sequence CAYLAVGAWFTGTTFVTSWYT. Position 117 (His-117) interacts with chlorophyll a. A helical transmembrane segment spans residues 124–140; it reads GFTLRQFEIARLIGLRP. Positions 129 and 142 each coordinate pheophytin a. A helical transmembrane segment spans residues 152-165; sequence VFVSVFLLYPLGQA. His-197 provides a ligand contact to chlorophyll a. Residues 207-227 form a helical membrane-spanning segment; that stretch reads AALLCAIHGATVENTLFEDGD. Residues His-214 and Phe-261 each coordinate a plastoquinone. Fe cation is bound at residue His-214. His-268 lines the Fe cation pocket. A helical membrane pass occupies residues 278–294; it reads GLWMSAIGVVGLGVNLR.

Belongs to the reaction center PufL/M/PsbA/D family. As to quaternary structure, PSII is composed of 1 copy each of membrane proteins PsbA, PsbB, PsbC, PsbD, PsbE, PsbF, PsbH, PsbI, PsbJ, PsbK, PsbL, PsbM, PsbT, PsbX, PsbY, PsbZ, Psb30/Ycf12, at least 3 peripheral proteins of the oxygen-evolving complex and a large number of cofactors. It forms dimeric complexes. Requires The D1/D2 heterodimer binds P680, chlorophylls that are the primary electron donor of PSII, and subsequent electron acceptors. It shares a non-heme iron and each subunit binds pheophytin, quinone, additional chlorophylls, carotenoids and lipids. There is also a Cl(-1) ion associated with D1 and D2, which is required for oxygen evolution. The PSII complex binds additional chlorophylls, carotenoids and specific lipids. as cofactor.

It localises to the plastid. The protein localises to the cyanelle thylakoid membrane. The catalysed reaction is 2 a plastoquinone + 4 hnu + 2 H2O = 2 a plastoquinol + O2. Its function is as follows. Photosystem II (PSII) is a light-driven water:plastoquinone oxidoreductase that uses light energy to abstract electrons from H(2)O, generating O(2) and a proton gradient subsequently used for ATP formation. It consists of a core antenna complex that captures photons, and an electron transfer chain that converts photonic excitation into a charge separation. The D1/D2 (PsbA/PsbD) reaction center heterodimer binds P680, the primary electron donor of PSII as well as several subsequent electron acceptors. D2 is needed for assembly of a stable PSII complex. The protein is Photosystem II D2 protein of Cyanophora paradoxa.